Consider the following 707-residue polypeptide: Elongation factor G (707 aa).

One can recognise a tr-type G domain in the interval 9-293 (HDVRNIGIMA…GVVDYLPSPE (285 aa)). GTP contacts are provided by residues 18–25 (AHIDAGKT), 90–94 (DTPGH), and 144–147 (NKMD).

Belongs to the TRAFAC class translation factor GTPase superfamily. Classic translation factor GTPase family. EF-G/EF-2 subfamily.

The protein localises to the cytoplasm. Its function is as follows. Catalyzes the GTP-dependent ribosomal translocation step during translation elongation. During this step, the ribosome changes from the pre-translocational (PRE) to the post-translocational (POST) state as the newly formed A-site-bound peptidyl-tRNA and P-site-bound deacylated tRNA move to the P and E sites, respectively. Catalyzes the coordinated movement of the two tRNA molecules, the mRNA and conformational changes in the ribosome. The sequence is that of Elongation factor G from Bifidobacterium longum (strain DJO10A).